The chain runs to 197 residues: MIIGLTGGIASGKSTVVEIIKDAGYKVIDADQLVHDMQVKGGRLYQALLDWLGDGILLPNGELNRPKLGQLIFSSEEMRYQSAEIQGKIIREELAAKRDCLAKEEDVFFMDIPLLFENDYQDWFDQIWLVAVSPQVQGQRLMKRNHLSAEEAGMRIASQMPLAEKLPYASLVIDNNGNIDDLKKKVKGAIKDLANLV.

The DPCK domain occupies 2-197 (IIGLTGGIAS…GAIKDLANLV (196 aa)). Residue 10–15 (ASGKST) coordinates ATP.

It belongs to the CoaE family.

The protein localises to the cytoplasm. It carries out the reaction 3'-dephospho-CoA + ATP = ADP + CoA + H(+). Its pathway is cofactor biosynthesis; coenzyme A biosynthesis; CoA from (R)-pantothenate: step 5/5. Its function is as follows. Catalyzes the phosphorylation of the 3'-hydroxyl group of dephosphocoenzyme A to form coenzyme A. The sequence is that of Dephospho-CoA kinase from Streptococcus thermophilus (strain ATCC BAA-250 / LMG 18311).